The primary structure comprises 247 residues: ATP synthase subunit a, chloroplastic (247 aa).

The next 5 helical transmembrane spans lie at 38-58 (QVLI…ILVV), 95-115 (VPFI…GALL), 134-154 (INTT…AGIS), 199-219 (LVVV…VMFL), and 220-240 (GLFT…AYIG).

Belongs to the ATPase A chain family. F-type ATPases have 2 components, CF(1) - the catalytic core - and CF(0) - the membrane proton channel. CF(1) has five subunits: alpha(3), beta(3), gamma(1), delta(1), epsilon(1). CF(0) has four main subunits: a, b, b' and c.

It is found in the plastid. It localises to the chloroplast thylakoid membrane. Its function is as follows. Key component of the proton channel; it plays a direct role in the translocation of protons across the membrane. This is ATP synthase subunit a, chloroplastic from Cicer arietinum (Chickpea).